A 159-amino-acid polypeptide reads, in one-letter code: 2-C-methyl-D-erythritol 2,4-cyclodiphosphate synthase (159 aa).

A divalent metal cation is bound by residues D10 and H12. 4-CDP-2-C-methyl-D-erythritol 2-phosphate is bound by residues 10-12 (DVH) and 37-38 (HS). H45 lines the a divalent metal cation pocket. 4-CDP-2-C-methyl-D-erythritol 2-phosphate-binding positions include 59–61 (DIG), 64–68 (FLDTD), 103–109 (AQAPKML), 135–138 (TTTE), F142, and R145.

It belongs to the IspF family. As to quaternary structure, homotrimer. It depends on a divalent metal cation as a cofactor.

The catalysed reaction is 4-CDP-2-C-methyl-D-erythritol 2-phosphate = 2-C-methyl-D-erythritol 2,4-cyclic diphosphate + CMP. The protein operates within isoprenoid biosynthesis; isopentenyl diphosphate biosynthesis via DXP pathway; isopentenyl diphosphate from 1-deoxy-D-xylulose 5-phosphate: step 4/6. Functionally, involved in the biosynthesis of isopentenyl diphosphate (IPP) and dimethylallyl diphosphate (DMAPP), two major building blocks of isoprenoid compounds. Catalyzes the conversion of 4-diphosphocytidyl-2-C-methyl-D-erythritol 2-phosphate (CDP-ME2P) to 2-C-methyl-D-erythritol 2,4-cyclodiphosphate (ME-CPP) with a corresponding release of cytidine 5-monophosphate (CMP). This is 2-C-methyl-D-erythritol 2,4-cyclodiphosphate synthase from Francisella tularensis subsp. holarctica (strain FTNF002-00 / FTA).